A 253-amino-acid polypeptide reads, in one-letter code: MTITGQINSETLNNGVPIFAPPYRWSKHWPRFTDVNCITIRYRTDGSSIRQYIPDNLQIEETPIVTIMLLDFGFSVIGPYHELIHCVEVTYEGKKYNYSFLLILDNEEACIGGRELLGNPKVLGTIEFDRQNRPPTAFIHGRVLRPSNTVIADIHFKPLCLVLDAGESKTPITGLNLRLIPSLIPGAPPSVREYTNVDFTLQGGEVWEGVGSLNFPSNSEFEPLHKFPVLEYLSATYHRGAWVEQRLLNVYSF.

Lysine 121 serves as the catalytic Schiff-base intermediate with acetoacetate.

It belongs to the ADC family.

The protein operates within mycotoxin biosynthesis. Its function is as follows. Decarboxylase; part of the Tox1B locus, one of the 2 loci that mediate the biosynthesis of T-toxin, a family of linear polyketides 37 to 45 carbons in length, of which the major component is 41 carbons, and which leads to high virulence to maize. One of the PKSs (PKS1 or PKS2) could synthesize a precursor, used subsequently by the other PKS as starter unit, to add additional carbons. Variability in the length of the final carbon backbone C35-47 could be achieved by varying the number of condensation cycles, or use of different starter or extender units or might be due to decarboxylation of the penultimate product, catalyzed by DEC1. Additional proteins are required for the biosynthesis of T-toxin, including oxidoreductases RED1, RED2, RED3, LAM1 and OXI1, as well as esterase TOX9. The chain is Decarboxylase DEC1 from Cochliobolus heterostrophus (strain C4 / ATCC 48331 / race T) (Southern corn leaf blight fungus).